The following is an 82-amino-acid chain: Colonization factor (82 aa).

The signal sequence occupies residues M1–A33.

Its subcellular location is the secreted. The chain is Colonization factor (cep) from Vibrio cholerae serotype O1 (strain ATCC 39315 / El Tor Inaba N16961).